A 271-amino-acid polypeptide reads, in one-letter code: Phosphatidylglycerol--prolipoprotein diacylglyceryl transferase (271 aa).

Transmembrane regions (helical) follow at residues 18-38 (LSVH…LWMA), 51-71 (IFID…RAYY), 89-109 (IWKG…TGIV), and 115-135 (GISF…GQAI). Arg-137 contributes to the a 1,2-diacyl-sn-glycero-3-phospho-(1'-sn-glycerol) binding site. 3 helical membrane-spanning segments follow: residues 177-197 (HPTF…LLLL), 205-225 (GNLF…IEGM), and 236-256 (LRIA…LMIF).

It belongs to the Lgt family.

It localises to the cell membrane. The catalysed reaction is L-cysteinyl-[prolipoprotein] + a 1,2-diacyl-sn-glycero-3-phospho-(1'-sn-glycerol) = an S-1,2-diacyl-sn-glyceryl-L-cysteinyl-[prolipoprotein] + sn-glycerol 1-phosphate + H(+). It functions in the pathway protein modification; lipoprotein biosynthesis (diacylglyceryl transfer). Its function is as follows. Catalyzes the transfer of the diacylglyceryl group from phosphatidylglycerol to the sulfhydryl group of the N-terminal cysteine of a prolipoprotein, the first step in the formation of mature lipoproteins. This Bacillus velezensis (strain DSM 23117 / BGSC 10A6 / LMG 26770 / FZB42) (Bacillus amyloliquefaciens subsp. plantarum) protein is Phosphatidylglycerol--prolipoprotein diacylglyceryl transferase.